A 196-amino-acid polypeptide reads, in one-letter code: Small ribosomal subunit protein uS4c (196 aa).

Residues 15 to 41 (LGALPGLTSKRPRSGSDLKNPLRSGKR) form a disordered region. One can recognise an S4 RNA-binding domain in the interval 89 to 150 (MRLDNILFRL…KQRSKALIQN (62 aa)).

The protein belongs to the universal ribosomal protein uS4 family. In terms of assembly, part of the 30S ribosomal subunit. Contacts protein S5. The interaction surface between S4 and S5 is involved in control of translational fidelity.

It is found in the plastid. The protein resides in the chloroplast. One of the primary rRNA binding proteins, it binds directly to 16S rRNA where it nucleates assembly of the body of the 30S subunit. Its function is as follows. With S5 and S12 plays an important role in translational accuracy. This chain is Small ribosomal subunit protein uS4c (rps4), found in Narcissus odorus (Campernelle jonquil).